Reading from the N-terminus, the 577-residue chain is Zinc finger-containing ubiquitin peptidase 1 (577 aa).

Residues 2–24 (LSCDICGETVTSEPDRKAHLIVH) form a C2H2-type 1 zinc finger. The segment at 29 to 52 (IICPFCKLSGINYNEMCFHIETAH) adopts a C2H2-type 2; atypical zinc-finger fold. C2H2-type zinc fingers lie at residues 153–176 (PECPFCGRIERYSQDMEIHVKTKH) and 192–214 (YDCPMCGLVCTNYHILQEHVDLH). Positions 225–247 (DRVQCSSDRELAHQLQQEEERKR) are MIU. A compositionally biased stretch (basic and acidic residues) spans 231–261 (SDRELAHQLQQEEERKRKSEESRQEREEFQK). Residues 231–262 (SDRELAHQLQQEEERKRKSEESRQEREEFQKL) are disordered. Residues 248-273 (KSEESRQEREEFQKLQRQYGLDNSGG) are zUBD/ZHA. K261 bears the N6-acetyllysine mark. C359 serves as the catalytic Nucleophile. The Proton acceptor role is filled by H490. Residue D511 is part of the active site.

It belongs to the peptidase C78 family. ZUFSP subfamily. In terms of assembly, interacts with RPA1 and RPA2.

The protein localises to the cytoplasm. It is found in the nucleus. It catalyses the reaction Thiol-dependent hydrolysis of ester, thioester, amide, peptide and isopeptide bonds formed by the C-terminal Gly of ubiquitin (a 76-residue protein attached to proteins as an intracellular targeting signal).. In terms of biological role, deubiquitinase with endodeubiquitinase activity that specifically interacts with and cleaves 'Lys-63'-linked long polyubiquitin chains. Shows only weak activity against 'Lys-11' and 'Lys-48'-linked chains. Plays an important role in genome stability pathways, functioning to prevent spontaneous DNA damage and also promote cellular survival in response to exogenous DNA damage. Modulates the ubiquitination status of replication protein A (RPA) complex proteins in response to replication stress. The sequence is that of Zinc finger-containing ubiquitin peptidase 1 from Rattus norvegicus (Rat).